The chain runs to 311 residues: Tyrosine recombinase XerD (311 aa).

Positions 2–95 (KTLALQLQGY…AVRGLHRFAA (94 aa)) constitute a Core-binding (CB) domain. In terms of domain architecture, Tyr recombinase spans 116 to 304 (RLPKSLTIDE…TVHALREVWA (189 aa)). Catalysis depends on residues Arg-160, Lys-184, His-256, Arg-259, and His-282. Tyr-291 acts as the O-(3'-phospho-DNA)-tyrosine intermediate in catalysis.

The protein belongs to the 'phage' integrase family. XerD subfamily. In terms of assembly, forms a cyclic heterotetrameric complex composed of two molecules of XerC and two molecules of XerD.

The protein resides in the cytoplasm. Site-specific tyrosine recombinase, which acts by catalyzing the cutting and rejoining of the recombining DNA molecules. The XerC-XerD complex is essential to convert dimers of the bacterial chromosome into monomers to permit their segregation at cell division. It also contributes to the segregational stability of plasmids. In Mycobacterium tuberculosis (strain CDC 1551 / Oshkosh), this protein is Tyrosine recombinase XerD.